Reading from the N-terminus, the 555-residue chain is Potassium-transporting ATPase potassium-binding subunit (555 aa).

10 consecutive transmembrane segments (helical) span residues 2–22, 60–80, 130–150, 173–193, 246–266, 278–298, 374–394, 412–432, 483–503, and 525–545; these read IWVA…PTGI, QYAL…YFIF, IGIT…VMAF, VFLP…VPQT, MSNI…PFTY, ILFV…TTSE, AGFV…GLMV, LIAV…ALAL, LVMF…AASL, and GIFI…MLVL.

The protein belongs to the KdpA family. In terms of assembly, the system is composed of three essential subunits: KdpA, KdpB and KdpC.

It is found in the cell membrane. In terms of biological role, part of the high-affinity ATP-driven potassium transport (or Kdp) system, which catalyzes the hydrolysis of ATP coupled with the electrogenic transport of potassium into the cytoplasm. This subunit binds the extracellular potassium ions and delivers the ions to the membrane domain of KdpB through an intramembrane tunnel. In Bacillus cereus (strain 03BB102), this protein is Potassium-transporting ATPase potassium-binding subunit.